We begin with the raw amino-acid sequence, 912 residues long: Translation initiation factor IF-2 (912 aa).

The segment at Asn185–Arg204 is disordered. A compositionally biased stretch (basic and acidic residues) spans Thr193–Arg204. Residues Leu411–Lys581 enclose the tr-type G domain. Residues Gly420–Thr427 are G1. Gly420 to Thr427 provides a ligand contact to GTP. Residues Gly445 to His449 are G2. Positions Asp467 to Gly470 are G3. GTP is bound by residues Asp467–His471 and Asn521–Asp524. The segment at Asn521–Asp524 is G4. Residues Ser557 to Lys559 form a G5 region.

This sequence belongs to the TRAFAC class translation factor GTPase superfamily. Classic translation factor GTPase family. IF-2 subfamily.

The protein resides in the cytoplasm. Functionally, one of the essential components for the initiation of protein synthesis. Protects formylmethionyl-tRNA from spontaneous hydrolysis and promotes its binding to the 30S ribosomal subunits. Also involved in the hydrolysis of GTP during the formation of the 70S ribosomal complex. This is Translation initiation factor IF-2 from Azobacteroides pseudotrichonymphae genomovar. CFP2.